We begin with the raw amino-acid sequence, 157 residues long: Protein FAM218A (157 aa).

A disordered region spans residues 104-127; sequence PAVTPPKLPGHSKSEGPPGKVRKR.

This chain is Protein FAM218A (FAM218A), found in Homo sapiens (Human).